Here is a 198-residue protein sequence, read N- to C-terminus: Transcription factor FapR (198 aa).

The 68-residue stretch at 102 to 169 (NRIARGHHLF…RTIVEVNSYV (68 aa)) folds into the MaoC-like domain.

This sequence belongs to the FapR family.

In terms of biological role, transcriptional factor involved in regulation of membrane lipid biosynthesis by repressing genes involved in fatty acid and phospholipid metabolism. The chain is Transcription factor FapR from Geobacillus sp. (strain WCH70).